We begin with the raw amino-acid sequence, 502 residues long: ATP synthase subunit beta (502 aa).

ATP is bound at residue 156–163; the sequence is GGAGVGKT.

Belongs to the ATPase alpha/beta chains family. As to quaternary structure, F-type ATPases have 2 components, CF(1) - the catalytic core - and CF(0) - the membrane proton channel. CF(1) has five subunits: alpha(3), beta(3), gamma(1), delta(1), epsilon(1). CF(0) has three main subunits: a(1), b(2) and c(9-12). The alpha and beta chains form an alternating ring which encloses part of the gamma chain. CF(1) is attached to CF(0) by a central stalk formed by the gamma and epsilon chains, while a peripheral stalk is formed by the delta and b chains.

It localises to the cell membrane. The enzyme catalyses ATP + H2O + 4 H(+)(in) = ADP + phosphate + 5 H(+)(out). Functionally, produces ATP from ADP in the presence of a proton gradient across the membrane. The catalytic sites are hosted primarily by the beta subunits. This is ATP synthase subunit beta from Cellulophaga lytica (Cytophaga lytica).